We begin with the raw amino-acid sequence, 620 residues long: Endoglucanase 21 (620 aa).

Residues 1 to 39 (MYGRDPWGGPLEINAADSMTDDDRSRNLQDLDRATPSRP) are disordered. The Cytoplasmic segment spans residues 1–70 (MYGRDPWGGP…DLGCILVSRK (70 aa)). The span at 21–39 (DDDRSRNLQDLDRATPSRP) shows a compositional bias: basic and acidic residues. Residues 71–91 (IFLWTLGTIVVTALLSGFITL) traverse the membrane as a helical; Signal-anchor for type II membrane protein segment. Residues 92–620 (IVKTLPHHHH…TPPPPAPWTP (529 aa)) lie on the Extracellular side of the membrane. N108 and N134 each carry an N-linked (GlcNAc...) asparagine glycan. D166 functions as the Nucleophile in the catalytic mechanism. N-linked (GlcNAc...) asparagine glycosylation is found at N217, N325, N346, N409, N426, and N482. Catalysis depends on residues H514 and D561. N-linked (GlcNAc...) asparagine glycosylation occurs at N567. E570 is an active-site residue.

This sequence belongs to the glycosyl hydrolase 9 (cellulase E) family. Expressed in conductive tissues of young roots, cotyledons, rosette leaves, cauline leaves and sepals. Expressed in the leaf trichome support cells.

It is found in the cell membrane. The catalysed reaction is Endohydrolysis of (1-&gt;4)-beta-D-glucosidic linkages in cellulose, lichenin and cereal beta-D-glucans.. In Arabidopsis thaliana (Mouse-ear cress), this protein is Endoglucanase 21 (KOR3).